A 510-amino-acid polypeptide reads, in one-letter code: Probable cytosol aminopeptidase (510 aa).

Residues Lys268 and Asp273 each coordinate Mn(2+). Lys280 is an active-site residue. The Mn(2+) site is built by Asp291, Asp350, and Glu352. Arg354 is a catalytic residue.

The protein belongs to the peptidase M17 family. Mn(2+) serves as cofactor.

It localises to the cytoplasm. The catalysed reaction is Release of an N-terminal amino acid, Xaa-|-Yaa-, in which Xaa is preferably Leu, but may be other amino acids including Pro although not Arg or Lys, and Yaa may be Pro. Amino acid amides and methyl esters are also readily hydrolyzed, but rates on arylamides are exceedingly low.. The enzyme catalyses Release of an N-terminal amino acid, preferentially leucine, but not glutamic or aspartic acids.. Its function is as follows. Presumably involved in the processing and regular turnover of intracellular proteins. Catalyzes the removal of unsubstituted N-terminal amino acids from various peptides. The chain is Probable cytosol aminopeptidase from Micrococcus luteus (strain ATCC 4698 / DSM 20030 / JCM 1464 / CCM 169 / CCUG 5858 / IAM 1056 / NBRC 3333 / NCIMB 9278 / NCTC 2665 / VKM Ac-2230) (Micrococcus lysodeikticus).